Here is a 524-residue protein sequence, read N- to C-terminus: MVVLAASIISKSGKALVSRQFVDMSRIRIEGLLAAFPKLVGTGKQHTYVETENVRYVYQPIEGLYLLLITNKQSNILEDLDTLRLLSKLVPEYSPSLDEEGVCKTAFELIFAFDEAISLGNKENVTVQQVKQYCEMESHEEKAHKLMMQSKINETRDVMKKKASELDKMRMERGKLDKGGYSSISGPRVIEKTFNDMSITGSGFGSGSGLGGLGMDMDSFASKPKGGRPSAAATAPGKGLGMKLGKTQKTNQFLESLKAEGEVILEDVQPSSVQSRASPLPPSDPVTVTIEEKLNVTVKRDGGVNNFDVQGTLALQVLNDADGFIQLQIENQDVPGLSFKTHPNINKDLFNSQQVVGAKDPNRPFPSGQNETPLVKWRIQGMDESSLPLSVNCWPSVSGSETYVNIEYEAAEMFDLHNVVISIPLPALREAPSVRQIDGEWKYDSRNSVLEWSILLIDQSNRSGSMEFVVPPADPSTFFPISIGFSASSTFSDLKVTGIRPLKDGNPPKYSQRARLVAANYQVV.

The tract at residues 215-244 is disordered; that stretch reads MDMDSFASKPKGGRPSAAATAPGKGLGMKL. The 242-residue stretch at 283-524 folds into the MHD domain; sequence SDPVTVTIEE…RLVAANYQVV (242 aa).

It belongs to the adaptor complexes medium subunit family. Delta-COP subfamily. Oligomeric complex that consists of at least the alpha, beta, beta', gamma, delta, epsilon and zeta subunits.

It is found in the cytoplasm. It localises to the golgi apparatus membrane. Its subcellular location is the cytoplasmic vesicle. The protein localises to the COPI-coated vesicle membrane. The coatomer is a cytosolic protein complex that binds to dilysine motifs and reversibly associates with Golgi non-clathrin-coated vesicles, which further mediate biosynthetic protein transport from the ER, via the Golgi up to the trans Golgi network. Coatomer complex is required for budding from Golgi membranes, and is essential for the retrograde Golgi-to-ER transport of dilysine-tagged proteins. This Oryza sativa subsp. japonica (Rice) protein is Coatomer subunit delta-1.